A 260-amino-acid polypeptide reads, in one-letter code: Voltage-dependent calcium channel gamma-6 subunit (260 aa).

A run of 4 helical transmembrane segments spans residues 43 to 63 (LLVA…EFWV), 143 to 163 (VIAV…IMVL), 169 to 189 (FLLR…FVSL), and 221 to 241 (LGCG…FLLL).

This sequence belongs to the PMP-22/EMP/MP20 family. CACNG subfamily. As to quaternary structure, interacts with CACNA1C. Identified in a complex with the L-type calcium channel subunits CACNA1C, CACNA2D1 and either CACNB1 or CACNB2. As to expression, detected in heart atrium and ventricle, aorta and skeletal muscle. Detected in heart left ventricle.

It localises to the cell membrane. Functionally, regulates the activity of L-type calcium channels that contain CACNA1C as pore-forming subunit. This chain is Voltage-dependent calcium channel gamma-6 subunit (Cacng6), found in Rattus norvegicus (Rat).